The following is a 434-amino-acid chain: Enolase (434 aa).

Gln-163 is a binding site for (2R)-2-phosphoglycerate. Glu-205 acts as the Proton donor in catalysis. Mg(2+) is bound by residues Asp-242, Glu-289, and Asp-316. 4 residues coordinate (2R)-2-phosphoglycerate: Lys-341, Arg-370, Ser-371, and Lys-392. Lys-341 serves as the catalytic Proton acceptor.

The protein belongs to the enolase family. It depends on Mg(2+) as a cofactor.

The protein localises to the cytoplasm. It localises to the secreted. Its subcellular location is the cell surface. It carries out the reaction (2R)-2-phosphoglycerate = phosphoenolpyruvate + H2O. The protein operates within carbohydrate degradation; glycolysis; pyruvate from D-glyceraldehyde 3-phosphate: step 4/5. Catalyzes the reversible conversion of 2-phosphoglycerate (2-PG) into phosphoenolpyruvate (PEP). It is essential for the degradation of carbohydrates via glycolysis. In Lacticaseibacillus paracasei (strain ATCC 334 / BCRC 17002 / CCUG 31169 / CIP 107868 / KCTC 3260 / NRRL B-441) (Lactobacillus paracasei), this protein is Enolase.